The chain runs to 493 residues: 3-octaprenyl-4-hydroxybenzoate carboxy-lyase (493 aa).

Asn-172 serves as a coordination point for Mn(2+). Residues 175–177 (IYR), 189–191 (RWL), and 194–195 (RG) contribute to the prenylated FMN site. Glu-238 contacts Mn(2+). Asp-287 acts as the Proton donor in catalysis.

This sequence belongs to the UbiD family. Homohexamer. Prenylated FMN serves as cofactor. The cofactor is Mn(2+).

The protein localises to the cell membrane. It catalyses the reaction a 4-hydroxy-3-(all-trans-polyprenyl)benzoate + H(+) = a 2-(all-trans-polyprenyl)phenol + CO2. It functions in the pathway cofactor biosynthesis; ubiquinone biosynthesis. In terms of biological role, catalyzes the decarboxylation of 3-octaprenyl-4-hydroxy benzoate to 2-octaprenylphenol, an intermediate step in ubiquinone biosynthesis. In Shewanella sediminis (strain HAW-EB3), this protein is 3-octaprenyl-4-hydroxybenzoate carboxy-lyase.